Reading from the N-terminus, the 256-residue chain is Imidazole glycerol phosphate synthase subunit HisF (256 aa).

Catalysis depends on residues D11 and D130.

Belongs to the HisA/HisF family. As to quaternary structure, heterodimer of HisH and HisF.

It localises to the cytoplasm. It carries out the reaction 5-[(5-phospho-1-deoxy-D-ribulos-1-ylimino)methylamino]-1-(5-phospho-beta-D-ribosyl)imidazole-4-carboxamide + L-glutamine = D-erythro-1-(imidazol-4-yl)glycerol 3-phosphate + 5-amino-1-(5-phospho-beta-D-ribosyl)imidazole-4-carboxamide + L-glutamate + H(+). It functions in the pathway amino-acid biosynthesis; L-histidine biosynthesis; L-histidine from 5-phospho-alpha-D-ribose 1-diphosphate: step 5/9. Its function is as follows. IGPS catalyzes the conversion of PRFAR and glutamine to IGP, AICAR and glutamate. The HisF subunit catalyzes the cyclization activity that produces IGP and AICAR from PRFAR using the ammonia provided by the HisH subunit. The chain is Imidazole glycerol phosphate synthase subunit HisF from Prochlorococcus marinus (strain MIT 9215).